Consider the following 160-residue polypeptide: Cytochrome b6-f complex subunit 4 (160 aa).

A run of 3 helical transmembrane segments spans residues 36-56, 95-115, and 131-151; these read LLYI…GLAV, LLGV…PFLE, and TVFL…AMPI.

It belongs to the cytochrome b family. PetD subfamily. As to quaternary structure, the 4 large subunits of the cytochrome b6-f complex are cytochrome b6, subunit IV (17 kDa polypeptide, petD), cytochrome f and the Rieske protein, while the 4 small subunits are petG, petL, petM and petN. The complex functions as a dimer.

The protein resides in the plastid. The protein localises to the chloroplast thylakoid membrane. In terms of biological role, component of the cytochrome b6-f complex, which mediates electron transfer between photosystem II (PSII) and photosystem I (PSI), cyclic electron flow around PSI, and state transitions. This Zygnema circumcarinatum (Green alga) protein is Cytochrome b6-f complex subunit 4.